The chain runs to 352 residues: Quinolinate synthase (352 aa).

Iminosuccinate-binding residues include histidine 48 and serine 69. Cysteine 114 serves as a coordination point for [4Fe-4S] cluster. Residues 140 to 142 (YAN) and serine 157 each bind iminosuccinate. Cysteine 201 serves as a coordination point for [4Fe-4S] cluster. Residues 227–229 (HPE) and threonine 244 contribute to the iminosuccinate site. A [4Fe-4S] cluster-binding site is contributed by cysteine 298.

It belongs to the quinolinate synthase family. Type 1 subfamily. The cofactor is [4Fe-4S] cluster.

It localises to the cytoplasm. It catalyses the reaction iminosuccinate + dihydroxyacetone phosphate = quinolinate + phosphate + 2 H2O + H(+). The protein operates within cofactor biosynthesis; NAD(+) biosynthesis; quinolinate from iminoaspartate: step 1/1. In terms of biological role, catalyzes the condensation of iminoaspartate with dihydroxyacetone phosphate to form quinolinate. This chain is Quinolinate synthase, found in Pseudomonas aeruginosa (strain UCBPP-PA14).